The chain runs to 228 residues: RNA chaperone ProQ (228 aa).

A disordered region spans residues 107–178 (KARVQAQRAE…REEKHTPVSD (72 aa)). Basic and acidic residues-rich tracts occupy residues 117–136 (QQAK…DAPR) and 146–175 (RRKE…KHTP).

This sequence belongs to the ProQ family.

The protein localises to the cytoplasm. RNA chaperone with significant RNA binding, RNA strand exchange and RNA duplexing activities. May regulate ProP activity through an RNA-based, post-transcriptional mechanism. The protein is RNA chaperone ProQ of Salmonella agona (strain SL483).